A 544-amino-acid chain; its full sequence is Methionine--tRNA ligase (544 aa).

Positions 10–20 match the 'HIGH' region motif; that stretch reads PYANGSLHLGH. Residues Cys141, Cys144, Cys153, and Cys156 each coordinate Zn(2+). Positions 329–333 match the 'KMSKS' region motif; the sequence is KLSTS. Thr332 contacts ATP.

It belongs to the class-I aminoacyl-tRNA synthetase family. MetG type 1 subfamily. As to quaternary structure, monomer. Zn(2+) is required as a cofactor.

It is found in the cytoplasm. The enzyme catalyses tRNA(Met) + L-methionine + ATP = L-methionyl-tRNA(Met) + AMP + diphosphate. Its function is as follows. Is required not only for elongation of protein synthesis but also for the initiation of all mRNA translation through initiator tRNA(fMet) aminoacylation. In Bacillus cereus (strain B4264), this protein is Methionine--tRNA ligase.